The chain runs to 208 residues: Thymidylate kinase (208 aa).

10–17 (GPEGSGKT) provides a ligand contact to ATP.

It belongs to the thymidylate kinase family.

The enzyme catalyses dTMP + ATP = dTDP + ADP. Its function is as follows. Phosphorylation of dTMP to form dTDP in both de novo and salvage pathways of dTTP synthesis. This chain is Thymidylate kinase, found in Bacillus cereus (strain ATCC 14579 / DSM 31 / CCUG 7414 / JCM 2152 / NBRC 15305 / NCIMB 9373 / NCTC 2599 / NRRL B-3711).